Consider the following 363-residue polypeptide: tRNA N6-adenosine threonylcarbamoyltransferase (363 aa).

Positions 138, 142, and 159 each coordinate Fe cation. Substrate contacts are provided by residues 159-163 (YVSGG), Asp191, Asp212, and Ser295. Asp323 contributes to the Fe cation binding site.

This sequence belongs to the KAE1 / TsaD family. Fe(2+) serves as cofactor.

It is found in the cytoplasm. The catalysed reaction is L-threonylcarbamoyladenylate + adenosine(37) in tRNA = N(6)-L-threonylcarbamoyladenosine(37) in tRNA + AMP + H(+). In terms of biological role, required for the formation of a threonylcarbamoyl group on adenosine at position 37 (t(6)A37) in tRNAs that read codons beginning with adenine. Is probably involved in the transfer of the threonylcarbamoyl moiety of threonylcarbamoyl-AMP (TC-AMP) to the N6 group of A37. The sequence is that of tRNA N6-adenosine threonylcarbamoyltransferase from Hyperthermus butylicus (strain DSM 5456 / JCM 9403 / PLM1-5).